Reading from the N-terminus, the 139-residue chain is Large ribosomal subunit protein uL16 (139 aa).

The span at 1 to 17 shows a compositional bias: basic residues; the sequence is MLMPKRVKYRKTQRGRM. The disordered stretch occupies residues 1-24; sequence MLMPKRVKYRKTQRGRMKGNSGRG.

It belongs to the universal ribosomal protein uL16 family. Part of the 50S ribosomal subunit.

Its function is as follows. Binds 23S rRNA and is also seen to make contacts with the A and possibly P site tRNAs. The polypeptide is Large ribosomal subunit protein uL16 (Pelodictyon phaeoclathratiforme (strain DSM 5477 / BU-1)).